A 582-amino-acid polypeptide reads, in one-letter code: Enhancer of polycomb-like protein 1 (582 aa).

Positions 238–295 (RDAQSADKLRRLRKELEDARQLVALVRQRELARKEMLSMERQIFLQRSEVKEMKRKLN) form a coiled coil. Residues 323–351 (PEQPKKKPAEAPAAQRPTAPQIRMPQKPG) form a disordered region. Positions 352–385 (TQAADDMQLLEDVQAEKENEILRDIKQNIAKHIK) form a coiled coil. The segment covering 539 to 555 (AQAHAQAQAQKRLQAEQ) has biased composition (low complexity). Residues 539–582 (AQAHAQAQAQKRLQAEQTTTNNGPPNIGHTMGSNPGPGAVASTS) are disordered.

The protein belongs to the enhancer of polycomb family. Component of the NuA4 histone acetyltransferase complex.

Its subcellular location is the nucleus. In terms of biological role, component of the NuA4 histone acetyltransferase complex which is involved in transcriptional activation of selected genes principally by acetylation of nucleosomal histone H4 and H2A. The NuA4 complex is also involved in DNA repair. Involved in gene silencing by neighboring heterochromatin, blockage of the silencing spreading along the chromosome, and required for cell cycle progression through G2/M. The polypeptide is Enhancer of polycomb-like protein 1 (epl1) (Aspergillus fumigatus (strain ATCC MYA-4609 / CBS 101355 / FGSC A1100 / Af293) (Neosartorya fumigata)).